The sequence spans 359 residues: Cytosolic sulfotransferase 15 (359 aa).

Residue 101-106 participates in 3'-phosphoadenylyl sulfate binding; it reads KSGTTW. Histidine 168 acts as the Proton acceptor in catalysis. Residues arginine 190, serine 198, tyrosine 256, and 322 to 324 contribute to the 3'-phosphoadenylyl sulfate site; that span reads RKG.

This sequence belongs to the sulfotransferase 1 family. Expressed in leaves.

Its subcellular location is the cytoplasm. The catalysed reaction is a 12-hydroxyjasmonate + 3'-phosphoadenylyl sulfate = a 12-sulfojasmonate + adenosine 3',5'-bisphosphate + H(+). Functionally, sulfotransferase that utilizes 3'-phospho-5'-adenylyl sulfate (PAPS) as sulfonate donor to specifically catalyze the sulfate conjugation of hydroxyjasmonates, with a preference for 12-hydroxyjasmonate over 11-hydroxyjasmonate. No activity with 12-hydroxyjasmonic acid methyl ester, cucurbic acid, 7-iso-cucurbic acid, 6-epi-cucurbic acid, 6-epi-7-iso-cucurbic acid and their methyl esters, prostaglandin E2, arachidonyl alcohol and 11-eicosenol. The protein is Cytosolic sulfotransferase 15 (SOT15) of Arabidopsis thaliana (Mouse-ear cress).